Consider the following 148-residue polypeptide: Large ribosomal subunit protein bL9 (148 aa).

Belongs to the bacterial ribosomal protein bL9 family.

Its function is as follows. Binds to the 23S rRNA. In Thermobifida fusca (strain YX), this protein is Large ribosomal subunit protein bL9.